The primary structure comprises 121 residues: Large ribosomal subunit protein bL12 (121 aa).

The protein belongs to the bacterial ribosomal protein bL12 family. In terms of assembly, homodimer. Part of the ribosomal stalk of the 50S ribosomal subunit. Forms a multimeric L10(L12)X complex, where L10 forms an elongated spine to which 2 to 4 L12 dimers bind in a sequential fashion. Binds GTP-bound translation factors.

In terms of biological role, forms part of the ribosomal stalk which helps the ribosome interact with GTP-bound translation factors. Is thus essential for accurate translation. This Xanthomonas campestris pv. campestris (strain B100) protein is Large ribosomal subunit protein bL12.